The following is a 374-amino-acid chain: Ribosomal RNA large subunit methyltransferase G (374 aa).

Belongs to the methyltransferase superfamily. RlmG family.

The protein localises to the cytoplasm. The enzyme catalyses guanosine(1835) in 23S rRNA + S-adenosyl-L-methionine = N(2)-methylguanosine(1835) in 23S rRNA + S-adenosyl-L-homocysteine + H(+). In terms of biological role, specifically methylates the guanine in position 1835 (m2G1835) of 23S rRNA. The protein is Ribosomal RNA large subunit methyltransferase G of Pseudomonas putida (strain ATCC 47054 / DSM 6125 / CFBP 8728 / NCIMB 11950 / KT2440).